The sequence spans 551 residues: Chaperonin GroEL (551 aa).

Residues 30–33 (TLGP), K51, 87–91 (DGTTT), G415, 481–483 (NAA), and D497 each bind ATP.

Belongs to the chaperonin (HSP60) family. As to quaternary structure, forms a cylinder of 14 subunits composed of two heptameric rings stacked back-to-back. Interacts with the co-chaperonin GroES.

It localises to the cytoplasm. The catalysed reaction is ATP + H2O + a folded polypeptide = ADP + phosphate + an unfolded polypeptide.. In terms of biological role, together with its co-chaperonin GroES, plays an essential role in assisting protein folding. The GroEL-GroES system forms a nano-cage that allows encapsulation of the non-native substrate proteins and provides a physical environment optimized to promote and accelerate protein folding. The protein is Chaperonin GroEL of Magnetococcus marinus (strain ATCC BAA-1437 / JCM 17883 / MC-1).